We begin with the raw amino-acid sequence, 253 residues long: UPF0758 protein Bxeno_A3578 (253 aa).

In terms of domain architecture, MPN spans 131 to 253 (LINSPEAVEN…VYSFARAGWP (123 aa)). Residues His-202, His-204, and Asp-215 each contribute to the Zn(2+) site. A JAMM motif motif is present at residues 202 to 215 (HNHPSGAVQPSASD).

It belongs to the UPF0758 family.

The chain is UPF0758 protein Bxeno_A3578 from Paraburkholderia xenovorans (strain LB400).